The primary structure comprises 895 residues: Plasma membrane ATPase 1 (895 aa).

The segment at 1–53 is disordered; it reads MSATEPTNEKVDKIVSDDEDEDIDQLVADLQSNPGAGDEEEEEENDSSFKAVP. Residues 1-92 are Cytoplasmic-facing; sequence MSATEPTNEK…AEEQENLVLK (92 aa). Positions 7–16 are enriched in basic and acidic residues; the sequence is TNEKVDKIVS. Residues 37-46 are compositionally biased toward acidic residues; that stretch reads GDEEEEEEND. Residues 93 to 113 form a helical membrane-spanning segment; the sequence is FVMFFVGPIQFVMEAAAVLAA. Residues 114–117 are Extracellular-facing; sequence GLED. The chain crosses the membrane as a helical span at residues 118 to 137; the sequence is WVDFGVICALLLLNAFVGFI. Residues 138–268 lie on the Cytoplasmic side of the membrane; sequence QEYQAGSIVD…GTGHFTEVLN (131 aa). A helical membrane pass occupies residues 269–290; it reads GIGTTLLVFVIVTLLVVWVACF. Over 291-301 the chain is Extracellular; that stretch reads YRTVRIVPILR. Residues 302–324 traverse the membrane as a helical segment; that stretch reads YTLAITIIGVPVGLPAVVTTTMA. The Cytoplasmic portion of the chain corresponds to 325–696; sequence VGAAYLAKKQ…IAILNRSLDI (372 aa). Residue Asp355 is the 4-aspartylphosphate intermediate of the active site. Residues Asp611 and Asp615 each contribute to the Mg(2+) site. A helical membrane pass occupies residues 697–715; sequence NLIVFIAIFADVATLAIAY. At 716–731 the chain is on the extracellular side; sequence DNAPYDPKPVKWNLPR. The helical transmembrane segment at 732-751 threads the bilayer; sequence LWGMSIVLGIILAIGTWITL. The Cytoplasmic portion of the chain corresponds to 752–801; that stretch reads TTMLLPKGGIIQNFGGLDGILFLQISLTENWLIFVTRAQGPFWSSIPSWQ. Residues 802–822 traverse the membrane as a helical segment; sequence LSGAVLIVDIIATCFTLFGWW. Residues 823-834 are Extracellular-facing; sequence SQNWTDIVTVVR. A helical membrane pass occupies residues 835 to 851; sequence TWIWSFGVFCVMGGAYY. Residues 852 to 895 lie on the Cytoplasmic side of the membrane; sequence LMSTSEAFDNFCNGRKPQQHTDKRSLEDFLVSMQRVSTQHEKST.

This sequence belongs to the cation transport ATPase (P-type) (TC 3.A.3) family. Type IIIA subfamily.

The protein localises to the cell membrane. The catalysed reaction is ATP + H2O + H(+)(in) = ADP + phosphate + 2 H(+)(out). The plasma membrane ATPase of plants and fungi is a hydrogen ion pump. The proton gradient it generates drives the active transport of nutrients by H(+)-symport. The resulting external acidification and/or internal alkinization may mediate growth responses. The sequence is that of Plasma membrane ATPase 1 (PMA1) from Candida albicans (Yeast).